A 341-amino-acid chain; its full sequence is Ribosomal RNA small subunit methyltransferase H (341 aa).

Residues 47–49, D64, F91, D109, and Q116 contribute to the S-adenosyl-L-methionine site; that span reads GGY.

The protein belongs to the methyltransferase superfamily. RsmH family.

The protein resides in the cytoplasm. The enzyme catalyses cytidine(1402) in 16S rRNA + S-adenosyl-L-methionine = N(4)-methylcytidine(1402) in 16S rRNA + S-adenosyl-L-homocysteine + H(+). In terms of biological role, specifically methylates the N4 position of cytidine in position 1402 (C1402) of 16S rRNA. The chain is Ribosomal RNA small subunit methyltransferase H from Rhizobium etli (strain ATCC 51251 / DSM 11541 / JCM 21823 / NBRC 15573 / CFN 42).